Reading from the N-terminus, the 220-residue chain is Protein DGCR6 (220 aa).

Residues 76-142 (KSLYNQRLRL…EQRAMDQKIV (67 aa)) adopt a coiled-coil conformation.

The protein belongs to the gonadal family. In terms of tissue distribution, found in all tissues examined with highest expression in liver, heart and skeletal muscle. Lower levels in pancreas and placenta. Weak expression in brain.

The protein localises to the nucleus. In terms of biological role, may play a role in neural crest cell migration into the third and fourth pharyngeal pouches. The protein is Protein DGCR6 (DGCR6) of Homo sapiens (Human).